Reading from the N-terminus, the 223-residue chain is Urease accessory protein UreF (223 aa).

Belongs to the UreF family. In terms of assembly, ureD, UreF and UreG form a complex that acts as a GTP-hydrolysis-dependent molecular chaperone, activating the urease apoprotein by helping to assemble the nickel containing metallocenter of UreC. The UreE protein probably delivers the nickel.

It localises to the cytoplasm. Functionally, required for maturation of urease via the functional incorporation of the urease nickel metallocenter. This chain is Urease accessory protein UreF, found in Sinorhizobium medicae (strain WSM419) (Ensifer medicae).